The following is a 116-amino-acid chain: MAKLSLFERRRRRVRTALKARSGGRPRLSVHRSGRHIYAQIIDDAAGRTLAAASTLVKGDKSIGANVDAAAKVGAEIAEKAKAAGITTVVFDRGGFLFHGRVKALADAAREGGLEF.

This sequence belongs to the universal ribosomal protein uL18 family. In terms of assembly, part of the 50S ribosomal subunit; part of the 5S rRNA/L5/L18/L25 subcomplex. Contacts the 5S and 23S rRNAs.

In terms of biological role, this is one of the proteins that bind and probably mediate the attachment of the 5S RNA into the large ribosomal subunit, where it forms part of the central protuberance. The polypeptide is Large ribosomal subunit protein uL18 (Novosphingobium aromaticivorans (strain ATCC 700278 / DSM 12444 / CCUG 56034 / CIP 105152 / NBRC 16084 / F199)).